The primary structure comprises 629 residues: Natural resistance-associated macrophage protein 2 homolog (629 aa).

Residues 1-151 (MNNNNNNKKL…KSKFSIKKLK (151 aa)) lie on the Cytoplasmic side of the membrane. Positions 50 to 119 (NVVNGSIEDS…SDIDSSGDSI (70 aa)) are disordered. The segment covering 62 to 85 (QQQQQQQQQQQQQQQQQQQQQQQQ) has biased composition (low complexity). Residues 96 to 105 (DKPFQDRDSN) are compositionally biased toward basic and acidic residues. Over residues 106–118 (IGDGSDIDSSGDS) the composition is skewed to low complexity. Residues 152–172 (SFLGPALFISVGYMDPGNWAT) form a helical membrane-spanning segment. At 173-182 (DLEGGSRFGY) the chain is on the extracellular side. A helical membrane pass occupies residues 183–203 (QLMWVLLFSNIMALFLQTLVI). Topologically, residues 204–224 (KLALVTKNDLAQQCRKEYSKT) are cytoplasmic. The chain crosses the membrane as a helical span at residues 225-245 (VNIFLWLILELAIISTDLAEV). The Extracellular portion of the chain corresponds to 246-253 (IGTAIGLN). A helical membrane pass occupies residues 254-274 (ILFGLPLIAGVAITSLDTLLF). At 275–286 (LAIQRWGIRKLE) the chain is on the cytoplasmic side. A helical transmembrane segment spans residues 287–307 (LLILLLLSMITMCFVIELFLS). The Extracellular portion of the chain corresponds to 308–326 (KPIASEVFSGFVPRLNSDS). The chain crosses the membrane as a helical span at residues 327–347 (VMVATGIVGATTMPHNLFLHG). Topologically, residues 348 to 376 (SVVKSRKIPNDRRKSVIKQAYRYNVIDTV) are cytoplasmic. Residues 377 to 397 (LALNCAFFVNIAILMLAASVF) form a helical membrane-spanning segment. Residues 398-421 (WKSNIQVTELSEAYRLLTKLMDGK) are Extracellular-facing. A helical transmembrane segment spans residues 422 to 442 (LAAVLFGLGLFLAGQSSTITG). The Cytoplasmic segment spans residues 443–468 (TMAGQIVMEGFIKLRIKPWLRRFITR). Residues 469-489 (LLAIIPAAIVIIVLGDKGTYT) form a helical membrane-spanning segment. Residues 490–491 (LL) are Extracellular-facing. The chain crosses the membrane as a helical span at residues 492 to 512 (IISQVLLSIGLPFAVVPLIIF). The Cytoplasmic portion of the chain corresponds to 513-527 (TSSYEIMGEFKNRLS). Residues 528 to 548 (IIIINSIIALFIIGLNLATIF) traverse the membrane as a helical segment. The Extracellular portion of the chain corresponds to 549 to 565 (QLINDFLHNDSIISKCL). N-linked (GlcNAc...) asparagine glycosylation occurs at N557. A helical transmembrane segment spans residues 566 to 586 (TIIFLIPLSIALCCLLLWLII). The Cytoplasmic portion of the chain corresponds to 587 to 629 (SKINFFTNLLSKIFNNNNNNNNKNIINNNNNYSGNTINNQTIQ).

This sequence belongs to the NRAMP family.

The protein resides in the cell membrane. Functionally, divalent transition metal (iron and manganese) transporter. The polypeptide is Natural resistance-associated macrophage protein 2 homolog (nramp2) (Dictyostelium discoideum (Social amoeba)).